Reading from the N-terminus, the 395-residue chain is S-adenosylmethionine synthase (395 aa).

ATP is bound at residue histidine 19. Position 21 (aspartate 21) interacts with Mg(2+). Glutamate 47 contributes to the K(+) binding site. L-methionine-binding residues include glutamate 60 and glutamine 103. Residues 103 to 113 form a flexible loop region; sequence QSPDIAQGVNS. ATP is bound by residues 170 to 172, 236 to 237, aspartate 245, 251 to 252, alanine 268, and lysine 272; these read DNK, KF, and RK. Aspartate 245 contributes to the L-methionine binding site. Lysine 276 serves as a coordination point for L-methionine.

This sequence belongs to the AdoMet synthase family. In terms of assembly, homotetramer; dimer of dimers. It depends on Mg(2+) as a cofactor. K(+) serves as cofactor.

It is found in the cytoplasm. It catalyses the reaction L-methionine + ATP + H2O = S-adenosyl-L-methionine + phosphate + diphosphate. It participates in amino-acid biosynthesis; S-adenosyl-L-methionine biosynthesis; S-adenosyl-L-methionine from L-methionine: step 1/1. Catalyzes the formation of S-adenosylmethionine (AdoMet) from methionine and ATP. The overall synthetic reaction is composed of two sequential steps, AdoMet formation and the subsequent tripolyphosphate hydrolysis which occurs prior to release of AdoMet from the enzyme. In Rhodopirellula baltica (strain DSM 10527 / NCIMB 13988 / SH1), this protein is S-adenosylmethionine synthase.